The chain runs to 204 residues: Quinol oxidase subunit 3 (204 aa).

5 helical membrane passes run 27 to 47 (FWIF…TFFV), 66 to 86 (LVMI…IAVH), 95 to 115 (GVVI…GCEI), 140 to 160 (LLGT…GILI), and 184 to 204 (FLDV…LGGL).

Belongs to the cytochrome c oxidase subunit 3 family.

Its subcellular location is the cell membrane. The enzyme catalyses 2 a quinol + O2 = 2 a quinone + 2 H2O. Catalyzes quinol oxidation with the concomitant reduction of oxygen to water. Major component for energy conversion during vegetative growth. This Bacillus spizizenii (strain ATCC 23059 / NRRL B-14472 / W23) (Bacillus subtilis subsp. spizizenii) protein is Quinol oxidase subunit 3 (qoxC).